We begin with the raw amino-acid sequence, 276 residues long: ATP synthase subunit a (276 aa).

6 consecutive transmembrane segments (helical) span residues 27-47 (ITML…LEVG), 61-81 (GQTF…SLAA), 120-140 (LPFI…GALL), 159-179 (DINT…YAGL), 225-245 (LVVA…LMAL), and 246-266 (GLFT…AYIH).

This sequence belongs to the ATPase A chain family. In terms of assembly, F-type ATPases have 2 components, CF(1) - the catalytic core - and CF(0) - the membrane proton channel. CF(1) has five subunits: alpha(3), beta(3), gamma(1), delta(1), epsilon(1). CF(0) has four main subunits: a, b, b' and c.

It is found in the cellular thylakoid membrane. Key component of the proton channel; it plays a direct role in the translocation of protons across the membrane. The protein is ATP synthase subunit a of Synechocystis sp. (strain ATCC 27184 / PCC 6803 / Kazusa).